Here is an 843-residue protein sequence, read N- to C-terminus: MGPQARTLCLLSLLLHVLPKPGKLVENSDFHLAGDYLLGGLFTLHANVKSISHLSYLQVPKCNEFTMKVLGYNLMQAMRFAVEEINNCSSLLPGVLLGYEMVDVCYLSNNIHPGLYFLAQDDDLLPILKDYSQYMPHVVAVIGPDNSESAITVSNILSHFLIPQITYSAISDKLRDKRHFPSMLRTVPSATHHIEAMVQLMVHFQWNWIVVLVSDDDYGRENSHLLSQRLTKTSDICIAFQEVLPIPESSQVMRSEEQRQLDNILDKLRRTSARVVVVFSPELSLYSFFHEVLRWNFTGFVWIASESWAIDPVLHNLTELRHTGTFLGVTIQRVSIPGFSQFRVRRDKPGYPVPNTTNLRTTCNQDCDACLNTTKSFNNILILSGERVVYSVYSAVYAVAHALHRLLGCNRVRCTKQKVYPWQLLREIWHVNFTLLGNRLFFDQQGDMPMLLDIIQWQWDLSQNPFQSIASYSPTSKRLTYINNVSWYTPNNTVPVSMCSKSCQPGQMKKSVGLHPCCFECLDCMPGTYLNRSADEFNCLSCPGSMWSYKNDITCFQRRPTFLEWHEVPTIVVAILAALGFFSTLAILFIFWRHFQTPMVRSAGGPMCFLMLVPLLLAFGMVPVYVGPPTVFSCFCRQAFFTVCFSICLSCITVRSFQIVCVFKMARRLPSAYSFWMRYHGPYVFVAFITAIKVALVVGNMLATTINPIGRTDPDDPNIMILSCHPNYRNGLLFNTSMDLLLSVLGFSFAYMGKELPTNYNEAKFITLSMTFSFTSSISLCTFMSVHDGVLVTIMDLLVTVLNFLAIGLGYFGPKCYMILFYPERNTSAYFNSMIQGYTMRKS.

The first 19 residues, 1–19 (MGPQARTLCLLSLLLHVLP), serve as a signal peptide directing secretion. Residues 20-570 (KPGKLVENSD…TFLEWHEVPT (551 aa)) are Extracellular-facing. N-linked (GlcNAc...) asparagine glycosylation is found at asparagine 87, asparagine 296, asparagine 316, asparagine 355, asparagine 372, asparagine 432, asparagine 484, asparagine 491, and asparagine 531. Residues 571–591 (IVVAILAALGFFSTLAILFIF) form a helical membrane-spanning segment. Residues 592–606 (WRHFQTPMVRSAGGP) lie on the Cytoplasmic side of the membrane. The helical transmembrane segment at 607–627 (MCFLMLVPLLLAFGMVPVYVG) threads the bilayer. At 628 to 642 (PPTVFSCFCRQAFFT) the chain is on the extracellular side. Residues 643-663 (VCFSICLSCITVRSFQIVCVF) form a helical membrane-spanning segment. Over 664-682 (KMARRLPSAYSFWMRYHGP) the chain is Cytoplasmic. Residues 683-703 (YVFVAFITAIKVALVVGNMLA) form a helical membrane-spanning segment. Residues 704–731 (TTINPIGRTDPDDPNIMILSCHPNYRNG) are Extracellular-facing. Residues 732–752 (LLFNTSMDLLLSVLGFSFAYM) traverse the membrane as a helical segment. The Cytoplasmic segment spans residues 753 to 764 (GKELPTNYNEAK). The chain crosses the membrane as a helical span at residues 765-785 (FITLSMTFSFTSSISLCTFMS). The Extracellular segment spans residues 786 to 789 (VHDG). Residues 790–810 (VLVTIMDLLVTVLNFLAIGLG) form a helical membrane-spanning segment. Residues 811 to 843 (YFGPKCYMILFYPERNTSAYFNSMIQGYTMRKS) lie on the Cytoplasmic side of the membrane.

The protein belongs to the G-protein coupled receptor 3 family. TAS1R subfamily. Forms heterodimers with TAS1R3. In terms of tissue distribution, abundantly expressed in circumvallate and foliate papillae.

It is found in the cell membrane. Putative taste receptor. TAS1R2/TAS1R3 recognizes diverse natural and synthetic sweeteners. In Rattus norvegicus (Rat), this protein is Taste receptor type 1 member 2 (Tas1r2).